The chain runs to 100 residues: Urease subunit gamma (100 aa).

Belongs to the urease gamma subunit family. In terms of assembly, heterotrimer of UreA (gamma), UreB (beta) and UreC (alpha) subunits. Three heterotrimers associate to form the active enzyme.

Its subcellular location is the cytoplasm. It catalyses the reaction urea + 2 H2O + H(+) = hydrogencarbonate + 2 NH4(+). The protein operates within nitrogen metabolism; urea degradation; CO(2) and NH(3) from urea (urease route): step 1/1. In Picosynechococcus sp. (strain ATCC 27264 / PCC 7002 / PR-6) (Agmenellum quadruplicatum), this protein is Urease subunit gamma.